A 351-amino-acid chain; its full sequence is Rab9 effector protein with kelch motifs (351 aa).

Kelch repeat units lie at residues 54 to 102 (KIVI…PESE), 105 to 156 (SLWV…TNSA), 162 to 210 (LFVF…VITA), 214 to 263 (DIYI…TFNK), 264 to 313 (NIFI…LLPW), and 328 to 351 (LCFV…TVLT).

Its function is as follows. Rab9 effector required for endosome to trans-Golgi network (TGN) transport. In Danio rerio (Zebrafish), this protein is Rab9 effector protein with kelch motifs (rabepk).